Consider the following 1092-residue polypeptide: Neural cell adhesion molecule 1-B (1092 aa).

A signal peptide spans 1-19 (MLHIKDLIWTLYFIGAAVA). Ig-like C2-type domains are found at residues 20–108 (LEVN…GTVN), 113–202 (QKLT…KDIQ), 208–295 (PPLI…EAIV), 303–397 (PKMT…FEVQ), and 400–489 (PKIR…FILV). Residues 20-705 (LEVNIVPDQG…ATSASTGLGT (686 aa)) are Extracellular-facing. Disulfide bonds link Cys41–Cys93 and Cys136–Cys186. N-linked (GlcNAc...) asparagine glycosylation occurs at Asn82. Heparin contacts are provided by residues 149-153 (RHKGK) and 158-162 (KKDVR). Asn219 carries an N-linked (GlcNAc...) asparagine glycan. The cysteines at positions 232 and 282 are disulfide-linked. 5 N-linked (GlcNAc...) asparagine glycosylation sites follow: Asn310, Asn341, Asn417, Asn443, and Asn472. Cys323 and Cys379 are disulfide-bonded. A disulfide bridge connects residues Cys420 and Cys473. 2 consecutive Fibronectin type-III domains span residues 493–592 (TPSS…TQPV) and 595–691 (EPSA…TAKP). The chain crosses the membrane as a helical span at residues 706 to 723 (GAIVGILIVTFVLLLVVV). Over 724 to 1092 (DVTCFFLNKC…TQRNVNESKA (369 aa)) the chain is Cytoplasmic. The segment covering 754 to 784 (KDIEEGKAAFSKDESKEPIVEVRTEEERTPN) has biased composition (basic and acidic residues). Disordered stretches follow at residues 754 to 1005 (KDIE…GGTF) and 1024 to 1092 (TPAA…ESKA). Composition is skewed to low complexity over residues 820 to 832 (TTVTTNSDTITET) and 839 to 851 (SPTSETTTLTSST). Polar residues predominate over residues 860–871 (DSNTVQSVQATP). The span at 917 to 929 (PSAATSAAEPPTA) shows a compositional bias: low complexity. A compositionally biased stretch (polar residues) spans 968–978 (AQPSTVKSPTE). The segment covering 1050–1068 (AKTEKTQVEENSKPEETDV) has biased composition (basic and acidic residues). The segment covering 1080–1092 (NEATQRNVNESKA) has biased composition (polar residues).

In terms of processing, polysialylated by ST8SIA2 and ST8SIA4. Polysialylation modulates cell interactions by confering both attractive and repulsive properties that are highly regulated by ST8SIA2 and ST8SIA4. Polysialylation is formed on a-2,3-linked sialic acid of core glycans.

It is found in the cell membrane. This protein is a cell adhesion molecule involved in neuron-neuron adhesion, neurite fasciculation, outgrowth of neurites, etc. The polypeptide is Neural cell adhesion molecule 1-B (Xenopus laevis (African clawed frog)).